Reading from the N-terminus, the 376-residue chain is 26S proteasome non-ATPase regulatory subunit 13 (376 aa).

The 168-residue stretch at Ser-171–Pro-338 folds into the PCI domain. Lys-298 is subject to N6-acetyllysine.

This sequence belongs to the proteasome subunit S11 family. In terms of assembly, component of the 19S proteasome regulatory particle complex. The 26S proteasome consists of a 20S core particle (CP) and two 19S regulatory subunits (RP). The regulatory particle is made of a lid composed of 9 subunits including PSMD13, a base containing 6 ATPases and few additional components.

Its function is as follows. Component of the 26S proteasome, a multiprotein complex involved in the ATP-dependent degradation of ubiquitinated proteins. This complex plays a key role in the maintenance of protein homeostasis by removing misfolded or damaged proteins, which could impair cellular functions, and by removing proteins whose functions are no longer required. Therefore, the proteasome participates in numerous cellular processes, including cell cycle progression, apoptosis, or DNA damage repair. In Mus musculus (Mouse), this protein is 26S proteasome non-ATPase regulatory subunit 13 (Psmd13).